The sequence spans 184 residues: Acireductone dioxygenase (184 aa).

Residues histidine 87, histidine 89, glutamate 93, and histidine 137 each coordinate Fe(2+). Residues histidine 87, histidine 89, glutamate 93, and histidine 137 each contribute to the Ni(2+) site.

This sequence belongs to the acireductone dioxygenase (ARD) family. Fe(2+) serves as cofactor. The cofactor is Ni(2+).

The protein resides in the cytoplasm. Its subcellular location is the nucleus. The catalysed reaction is 1,2-dihydroxy-5-(methylsulfanyl)pent-1-en-3-one + O2 = 4-methylsulfanyl-2-oxobutanoate + formate + 2 H(+). The enzyme catalyses 1,2-dihydroxy-5-(methylsulfanyl)pent-1-en-3-one + O2 = 3-(methylsulfanyl)propanoate + CO + formate + 2 H(+). The protein operates within amino-acid biosynthesis; L-methionine biosynthesis via salvage pathway; L-methionine from S-methyl-5-thio-alpha-D-ribose 1-phosphate: step 5/6. Its function is as follows. Catalyzes 2 different reactions between oxygen and the acireductone 1,2-dihydroxy-3-keto-5-methylthiopentene (DHK-MTPene) depending upon the metal bound in the active site. Fe-containing acireductone dioxygenase (Fe-ARD) produces formate and 2-keto-4-methylthiobutyrate (KMTB), the alpha-ketoacid precursor of methionine in the methionine recycle pathway. Ni-containing acireductone dioxygenase (Ni-ARD) produces methylthiopropionate, carbon monoxide and formate, and does not lie on the methionine recycle pathway. The sequence is that of Acireductone dioxygenase from Ciona intestinalis (Transparent sea squirt).